We begin with the raw amino-acid sequence, 309 residues long: Homoserine O-acetyltransferase (309 aa).

The active-site Acyl-thioester intermediate is C142. The substrate site is built by K163 and S192. Catalysis depends on H235, which acts as the Proton acceptor. E237 is an active-site residue. R249 contacts substrate.

It belongs to the MetA family.

Its subcellular location is the cytoplasm. It carries out the reaction L-homoserine + acetyl-CoA = O-acetyl-L-homoserine + CoA. The protein operates within amino-acid biosynthesis; L-methionine biosynthesis via de novo pathway; O-acetyl-L-homoserine from L-homoserine: step 1/1. Its function is as follows. Transfers an acetyl group from acetyl-CoA to L-homoserine, forming acetyl-L-homoserine. In Methanomethylophilus alvi (strain Mx1201), this protein is Homoserine O-acetyltransferase.